The chain runs to 148 residues: Protein NrdI (148 aa).

It belongs to the NrdI family.

Its function is as follows. Probably involved in ribonucleotide reductase function. The sequence is that of Protein NrdI from Mycolicibacterium gilvum (strain PYR-GCK) (Mycobacterium gilvum (strain PYR-GCK)).